The sequence spans 348 residues: Protein RecA (348 aa).

Residue 66–73 participates in ATP binding; that stretch reads GPESSGKT.

Belongs to the RecA family.

It localises to the cytoplasm. Functionally, can catalyze the hydrolysis of ATP in the presence of single-stranded DNA, the ATP-dependent uptake of single-stranded DNA by duplex DNA, and the ATP-dependent hybridization of homologous single-stranded DNAs. It interacts with LexA causing its activation and leading to its autocatalytic cleavage. The sequence is that of Protein RecA from Burkholderia lata (strain ATCC 17760 / DSM 23089 / LMG 22485 / NCIMB 9086 / R18194 / 383).